The following is a 124-amino-acid chain: Small ribosomal subunit protein uS13 (124 aa).

The disordered stretch occupies residues 97–124; it reads PVRGQRTKTNARTRKGPKRTIAGKKKAR.

The protein belongs to the universal ribosomal protein uS13 family. Part of the 30S ribosomal subunit. Forms a loose heterodimer with protein S19. Forms two bridges to the 50S subunit in the 70S ribosome.

Located at the top of the head of the 30S subunit, it contacts several helices of the 16S rRNA. In the 70S ribosome it contacts the 23S rRNA (bridge B1a) and protein L5 of the 50S subunit (bridge B1b), connecting the 2 subunits; these bridges are implicated in subunit movement. Contacts the tRNAs in the A and P-sites. In Mycolicibacterium gilvum (strain PYR-GCK) (Mycobacterium gilvum (strain PYR-GCK)), this protein is Small ribosomal subunit protein uS13.